The chain runs to 118 residues: Putative pterin-4-alpha-carbinolamine dehydratase (118 aa).

It belongs to the pterin-4-alpha-carbinolamine dehydratase family.

It catalyses the reaction (4aS,6R)-4a-hydroxy-L-erythro-5,6,7,8-tetrahydrobiopterin = (6R)-L-erythro-6,7-dihydrobiopterin + H2O. This Xanthomonas oryzae pv. oryzae (strain PXO99A) protein is Putative pterin-4-alpha-carbinolamine dehydratase.